The following is an 894-amino-acid chain: MGACLTLSFSCDEVVNQISQGLCINVGYICELSKNVVAMKKDMEVLKKKRDDVKRRVDIEEFTRRRERLSQVQGWLTNVSTVENKFNELLTTNDAELQRLCLFGFCSKNVKMSYLYGKRVVLMLKEIESLSSQGDFDTVTLATPIARIEEMPIQPTIVGQETMLERVWTRLTEDGDEIVGLYGMGGVGKTTLLTRINNKFSEKCSGFGVVIWVVVSKSPDIHRIQGDIGKRLDLGGEEWDNVNENQRALDIYNVLGKQKFVLLLDDIWEKVNLEVLGVPYPSRQNGCKVVFTTRSRDVCGRMRVDDPMEVSCLEPNEAWELFQMKVGENTLKGHPDIPELARKVAGKCCGLPLALNVIGETMACKRMVQEWRNAIDVLSSYAAEFPGMEQILPILKYSYDNLNKEQVKPCFLYCSLFPEDYRMEKERLIDYWICEGFIDENESRERALSQGYEIIGILVRACLLLEEAINKEQVKMHDVVREMALWIASDLGEHKERCIVQVGVGLREVPKVKNWSSVRRMSLMENEIEILSGSPECLELTTLFLQKNDSLLHISDEFFRCIPMLVVLDLSGNSSLRKLPNQISKLVSLRYLDLSWTYIKRLPVGLQELKKLRYLRLDYMKRLKSISGISNISSLRKLQLLQSKMSLDMSLVEELQLLEHLEVLNISIKSSLVVEKLLNAPRLVKCLQILVLRGVQEESSGVLTLPDMDNLNKVIIRKCGMCEIKIERKTLSLSSNRSPKTQFLHNLSTVHISSCDGLKDLTWLLFAPNLTSLEVLDSELVEGIINQEKAMTMSGIIPFQKLESLRLHNLAMLRSIYWQPLSFPCLKTIHITKCPELRKLPLDSEIAIRDEELVIKYQEEEWLERVEWDNEATRLRFLPFFKFFGPEWQVSYVR.

Positions 31–71 (ELSKNVVAMKKDMEVLKKKRDDVKRRVDIEEFTRRRERLSQ) form a coiled coil. The 304-residue stretch at 140-443 (TLATPIARIE…CEGFIDENES (304 aa)) folds into the NB-ARC domain. 183-190 (GMGGVGKT) is a binding site for ATP. 7 LRR repeats span residues 517–538 (SVRRMSLMENEIEILSGSPECL), 539–561 (ELTTLFLQKNDSLLHISDEFFRC), 564–586 (MLVVLDLSGNSSLRKLPNQISKL), 588–610 (SLRYLDLSWTYIKRLPVGLQELK), 611–633 (KLRYLRLDYMKRLKSISGISNIS), 634–656 (SLRKLQLLQSKMSLDMSLVEELQ), and 660–681 (HLEVLNISIKSSLVVEKLLNAP).

It belongs to the disease resistance NB-LRR family. As to quaternary structure, interacts with PAT1.

With respect to regulation, negatively regulated by the MEKK1-MKK1-MKK2-MPK4 kinase cascade. Functionally, disease resistance protein that mediates defense responses against the bacterial pathogen Pseudomonas syringae pv tomato strain DC3000, and the virulent oomycete Hyaloperonospora arabidopsidis isolate Noco2. Becomes active when the MEKK1-MKK1-MKK2-MPK4 kinase cascade is disrupted by the microbial effector hopAI1. Does not seem to be required for the activation of MPK4 by flg22, or flg22-induced up-regulation of PAD3. Functions downstream of MEKK2/SUMM1 in immune responses, including cell death and defense responses. This is Disease resistance protein SUMM2 from Arabidopsis thaliana (Mouse-ear cress).